A 427-amino-acid polypeptide reads, in one-letter code: Serine hydroxymethyltransferase (427 aa).

120–122 (GHI) contacts (6S)-5,6,7,8-tetrahydrofolate. Position 226 is an N6-(pyridoxal phosphate)lysine (K226).

Belongs to the SHMT family. In terms of assembly, homodimer. Pyridoxal 5'-phosphate is required as a cofactor.

The protein resides in the cytoplasm. Its pathway is amino-acid biosynthesis; glycine biosynthesis; glycine from L-serine: step 1/1. In terms of biological role, catalyzes the reversible interconversion of serine and glycine with a modified folate serving as the one-carbon carrier. Also exhibits a pteridine-independent aldolase activity toward beta-hydroxyamino acids, producing glycine and aldehydes, via a retro-aldol mechanism. The chain is Serine hydroxymethyltransferase from Pyrococcus abyssi (strain GE5 / Orsay).